The chain runs to 310 residues: tRNA dimethylallyltransferase (310 aa).

Residue 14–21 (GPTASGKS) coordinates ATP. 16–21 (TASGKS) contributes to the substrate binding site. Interaction with substrate tRNA regions lie at residues 39–42 (DSMQ) and 163–167 (QRIVR).

This sequence belongs to the IPP transferase family. Monomer. Mg(2+) is required as a cofactor.

It catalyses the reaction adenosine(37) in tRNA + dimethylallyl diphosphate = N(6)-dimethylallyladenosine(37) in tRNA + diphosphate. In terms of biological role, catalyzes the transfer of a dimethylallyl group onto the adenine at position 37 in tRNAs that read codons beginning with uridine, leading to the formation of N6-(dimethylallyl)adenosine (i(6)A). The polypeptide is tRNA dimethylallyltransferase (Brucella abortus (strain S19)).